Here is a 1029-residue protein sequence, read N- to C-terminus: MEEQVANAIEIASNPSSEPALKAQAFDFVNQLRSDPSGWQVCLSLFTQTPQRSGIVRHVALEVVNGAAQGGLIDLQALAFVKDGLLAYLRQVYGQDAGASDPPNIQNKIAQTVTFLFSALYANGWETFFDDLLSLTYKSPSSTARDNASGIIFYLRVINSIHDEIGDVLVSRSRNEQDKANSLKDLIRQRDMQQITSSWQQILSEWRDGNDVIVEMCLKAVGSWVSWIDIGLVVNQTMLDLLFQQLGRAQKADLRQGEEKVRDAAVDVFTEIIGKKMKAEDKIDMIIFLNLDTIVSQLSNSPPLHANRFTFKYDTDLAETVAKLVNITVIDIVRALEQEGVSAECKEKANGLLQVFLPHILRFFSDEYDEVCSTVIPCVSDLLTYLRKIAKINPALAAQHSSILLPILKAIIAKMRYDDTSSWGDEDDQTDEAEFQELRKRLGVLQQIVASVNEQLYMEAVSEVVGTTFENLRQSGAQLDWRDLDLALHEMFLFGDLAVKAGSLYTKGSPNNQAAERLIEMMLRMVESDIRSFTHPATQLQYMEICVRYSSFFHHHTHLIPGVLESFLQLVHHPVKKVKTRSWYLFQRLVKQLRQYIGNVAQTVVEALGDLLVIQAEVSPEGSDGDEMSSEDHEGSADAVFNSQLYLFEAVGIICSTPTVPADKQVLYAQSVLNPIFLDMEKNLEAAKSHDERALLQIHHDIMALGTLARGFSDWMPGTNTPATLPAPEVSEAFNQVSEATLVALESLKTSFNVRTAARFAFSRLIGVLGSRILPQLPRWIDGLLTQTSSRDEMALFLRLLDQVIFGFKGEIYSILDTLLTPFLQRVFSGIADPTTGTDDEIRLAELKREYLNFLLAVLNNDLGAVIISERNQPIFETVISTIEHFSKDIDDFTTAKMAFSVLSKMGSSWGGPDIAPDATNGVPPQAALPGFSQFMISRFSPLCWALPTTPSFNSKDAQARQVLAEAGGLQRTIYSKTGMEYIAYLRDRELPGMGMGGELIEEFLGALSRLDLKGFRQFFPSFIQRLSA.

Belongs to the exportin family.

It localises to the nucleus. Its subcellular location is the cytoplasm. TRNA nucleus export receptor which facilitates tRNA translocation across the nuclear pore complex. Involved in pre-tRNA splicing, probably by affecting the interaction of pre-tRNA with splicing endonuclease. The chain is Exportin-T (los1) from Aspergillus clavatus (strain ATCC 1007 / CBS 513.65 / DSM 816 / NCTC 3887 / NRRL 1 / QM 1276 / 107).